Consider the following 170-residue polypeptide: Ribosome maturation factor RimM (170 aa).

In terms of domain architecture, PRC barrel spans 98 to 170 (PDEYYWVDLE…LIVVDWDPDF (73 aa)).

The protein belongs to the RimM family. As to quaternary structure, binds ribosomal protein uS19.

It is found in the cytoplasm. Functionally, an accessory protein needed during the final step in the assembly of 30S ribosomal subunit, possibly for assembly of the head region. Essential for efficient processing of 16S rRNA. May be needed both before and after RbfA during the maturation of 16S rRNA. It has affinity for free ribosomal 30S subunits but not for 70S ribosomes. This chain is Ribosome maturation factor RimM, found in Xanthomonas axonopodis pv. citri (strain 306).